A 171-amino-acid chain; its full sequence is Adenine phosphoribosyltransferase (171 aa).

This sequence belongs to the purine/pyrimidine phosphoribosyltransferase family. As to quaternary structure, homodimer.

It localises to the cytoplasm. The catalysed reaction is AMP + diphosphate = 5-phospho-alpha-D-ribose 1-diphosphate + adenine. It functions in the pathway purine metabolism; AMP biosynthesis via salvage pathway; AMP from adenine: step 1/1. In terms of biological role, catalyzes a salvage reaction resulting in the formation of AMP, that is energically less costly than de novo synthesis. This Prochlorococcus marinus subsp. pastoris (strain CCMP1986 / NIES-2087 / MED4) protein is Adenine phosphoribosyltransferase (apt).